A 198-amino-acid chain; its full sequence is Nucleoid occlusion factor SlmA (198 aa).

In terms of domain architecture, HTH tetR-type spans Asn10–Leu70. The segment at residues Thr33 to Phe52 is a DNA-binding region (H-T-H motif). The stretch at Glu117 to Arg144 forms a coiled coil.

The protein belongs to the nucleoid occlusion factor SlmA family. As to quaternary structure, homodimer. Interacts with FtsZ.

The protein localises to the cytoplasm. Its subcellular location is the nucleoid. In terms of biological role, required for nucleoid occlusion (NO) phenomenon, which prevents Z-ring formation and cell division over the nucleoid. Acts as a DNA-associated cell division inhibitor that binds simultaneously chromosomal DNA and FtsZ, and disrupts the assembly of FtsZ polymers. SlmA-DNA-binding sequences (SBS) are dispersed on non-Ter regions of the chromosome, preventing FtsZ polymerization at these regions. The protein is Nucleoid occlusion factor SlmA of Escherichia coli O127:H6 (strain E2348/69 / EPEC).